A 299-amino-acid chain; its full sequence is Putative glycylpeptide N-tetradecanoyltransferase (299 aa).

This sequence belongs to the NMT family.

The catalysed reaction is N-terminal glycyl-[protein] + tetradecanoyl-CoA = N-tetradecanoylglycyl-[protein] + CoA + H(+). In terms of biological role, adds a myristoyl group to the N-terminal glycine residue of certain proteins. The sequence is that of Putative glycylpeptide N-tetradecanoyltransferase from Amsacta moorei entomopoxvirus (AmEPV).